An 817-amino-acid polypeptide reads, in one-letter code: DNA ligase (817 aa).

NAD(+)-binding positions include 45 to 49, 94 to 95, and glutamate 131; these read DVEYD and SI. Residue lysine 133 is the N6-AMP-lysine intermediate of the active site. 4 residues coordinate NAD(+): arginine 154, glutamate 193, lysine 311, and lysine 335. Residues cysteine 444, cysteine 447, cysteine 462, and cysteine 468 each coordinate Zn(2+). Residues 733 to 817 enclose the BRCT domain; it reads AEEGVLDGKT…LLKKPAGDQA (85 aa).

The protein belongs to the NAD-dependent DNA ligase family. LigA subfamily. Mg(2+) serves as cofactor. Requires Mn(2+) as cofactor.

The catalysed reaction is NAD(+) + (deoxyribonucleotide)n-3'-hydroxyl + 5'-phospho-(deoxyribonucleotide)m = (deoxyribonucleotide)n+m + AMP + beta-nicotinamide D-nucleotide.. Functionally, DNA ligase that catalyzes the formation of phosphodiester linkages between 5'-phosphoryl and 3'-hydroxyl groups in double-stranded DNA using NAD as a coenzyme and as the energy source for the reaction. It is essential for DNA replication and repair of damaged DNA. This is DNA ligase from Ralstonia pickettii (strain 12J).